Consider the following 546-residue polypeptide: Chaperonin GroEL (546 aa).

Residues 29–32 (TLGP), lysine 50, 86–90 (DGTTT), glycine 414, 477–479 (NAL), and aspartate 493 contribute to the ATP site. The tract at residues 522 to 546 (KPEKDAPNPMAGMGGGGMGGMGGMM) is disordered. The segment covering 533–546 (GMGGGGMGGMGGMM) has biased composition (gly residues).

Belongs to the chaperonin (HSP60) family. Forms a cylinder of 14 subunits composed of two heptameric rings stacked back-to-back. Interacts with the co-chaperonin GroES.

It localises to the cytoplasm. The enzyme catalyses ATP + H2O + a folded polypeptide = ADP + phosphate + an unfolded polypeptide.. In terms of biological role, together with its co-chaperonin GroES, plays an essential role in assisting protein folding. The GroEL-GroES system forms a nano-cage that allows encapsulation of the non-native substrate proteins and provides a physical environment optimized to promote and accelerate protein folding. The sequence is that of Chaperonin GroEL from Leptospira borgpetersenii serovar Hardjo-bovis (strain JB197).